The sequence spans 321 residues: MTIAKDYRTIYRNQIKKQIRLNQEHLQSLTHLGSQINFEVDPPKLPDPDPARKVFFFDIDNTLYRKSTKVQLLMQQSLSNFFKYELGFDDDEAERLIESYYQEYGLSVKGLIKNKQIDDVLQYNTFIDDSLPLQDYLKPDWKLRELLINLKKKKLGKFDKLWLFTNSYKNHAIRCVKILGIADLFDGITYCHYDRPIEEEFICKPDPKFFETAKLQSGLSSFANAWFIDDNESNVRSALSMGMGHVIHLIEDYQYESENIVTKDHKNKQQFSILKDILEIPLIMDVEVYRPSSIAIKEMEELEEEGEAVNWSNQQINVQSS.

This sequence belongs to the SSM1 family.

In terms of biological role, may be involved in phosphate metabolism. This is Phosphate metabolism protein 8 (PHM8) from Saccharomyces cerevisiae (strain ATCC 204508 / S288c) (Baker's yeast).